The sequence spans 322 residues: Mycothiol acetyltransferase (322 aa).

2 consecutive N-acetyltransferase domains span residues 5–150 and 160–322; these read SWLR…DPDD and VTIR…PARG. Glu-36 contacts 1D-myo-inositol 2-(L-cysteinylamino)-2-deoxy-alpha-D-glucopyranoside. Residues 79–81 and 87–92 contribute to the acetyl-CoA site; these read LVV and RRGVGT. 1D-myo-inositol 2-(L-cysteinylamino)-2-deoxy-alpha-D-glucopyranoside-binding residues include Glu-187, Lys-226, and Glu-252. 256-258 contacts acetyl-CoA; that stretch reads VGV. Tyr-290 contributes to the 1D-myo-inositol 2-(L-cysteinylamino)-2-deoxy-alpha-D-glucopyranoside binding site. An acetyl-CoA-binding site is contributed by 295-300; that stretch reads NARAVR.

This sequence belongs to the acetyltransferase family. MshD subfamily. In terms of assembly, monomer.

It catalyses the reaction 1D-myo-inositol 2-(L-cysteinylamino)-2-deoxy-alpha-D-glucopyranoside + acetyl-CoA = mycothiol + CoA + H(+). Its function is as follows. Catalyzes the transfer of acetyl from acetyl-CoA to desacetylmycothiol (Cys-GlcN-Ins) to form mycothiol. The sequence is that of Mycothiol acetyltransferase from Parafrankia sp. (strain EAN1pec).